We begin with the raw amino-acid sequence, 385 residues long: Mannitol-1-phosphate 5-dehydrogenase (385 aa).

3–14 is a binding site for NAD(+); sequence DVHFGAGNIGRG.

This sequence belongs to the mannitol dehydrogenase family.

It catalyses the reaction D-mannitol 1-phosphate + NAD(+) = beta-D-fructose 6-phosphate + NADH + H(+). This chain is Mannitol-1-phosphate 5-dehydrogenase, found in Lactiplantibacillus plantarum (strain ATCC BAA-793 / NCIMB 8826 / WCFS1) (Lactobacillus plantarum).